The following is a 416-amino-acid chain: Calreticulin (416 aa).

Positions 1–27 are cleaved as a signal peptide; the sequence is MATQRRANPSSLHLITVFSLLVAVVSA. The N-linked (GlcNAc...) asparagine glycan is linked to Asn59. The cysteines at positions 113 and 145 are disulfide-linked. Residues Tyr117, Lys119, Tyr136, and Asp143 each coordinate an alpha-D-glucoside. A glycan (N-linked (GlcNAc...) asparagine) is linked at Asn159. Tandem repeats lie at residues 199 to 210, 218 to 229, 235 to 246, 253 to 264, 268 to 278, 282 to 292, and 296 to 306. The interval 199 to 264 is 4 X approximate repeats; sequence KQSGSLYSDW…DAKKPEDWDD (66 aa). Residues 215–225 show a composition bias toward basic and acidic residues; that stretch reads TIKDPSAKKPE. Positions 215–286 are disordered; it reads TIKDPSAKKP…NPEYKGPWKP (72 aa). Acidic residues-rich tracts occupy residues 226 to 236 and 244 to 253; these read DWDEKEFIDDP and YDDIPEEITD. Positions 268 to 306 are 3 X approximate repeats; sequence GEWTAPTIPNPEYKGPWKPKKIKNPNYKGKWKAPLIDNP. Glu326 contributes to the an alpha-D-glucoside binding site. Residues 355–380 show a composition bias toward basic and acidic residues; it reads TWGKQKDAEKAAFEEAEKKREEEESK. Positions 355 to 416 are disordered; sequence TWGKQKDAEK…SKDDEAHDEL (62 aa). Positions 386-403 are enriched in acidic residues; it reads SDAEEDDDADDDSDDADD. Basic and acidic residues predominate over residues 404 to 416; the sequence is KSESKDDEAHDEL. The Prevents secretion from ER signature appears at 413 to 416; it reads HDEL.

The protein belongs to the calreticulin family.

The protein localises to the endoplasmic reticulum lumen. In terms of biological role, molecular calcium-binding chaperone promoting folding, oligomeric assembly and quality control in the ER via the calreticulin/calnexin cycle. This lectin may interact transiently with almost all of the monoglucosylated glycoproteins that are synthesized in the ER. The protein is Calreticulin (CAL1) of Nicotiana plumbaginifolia (Leadwort-leaved tobacco).